A 58-amino-acid chain; its full sequence is UPF0337 protein SAV_738 (58 aa).

The tract at residues 1-58 (MAADEKAQANGEQAKGKVKKVVGGAAGNESLKGKGHAEESKGDLRAAKEKAKDAIKRK) is disordered. The span at 31–58 (LKGKGHAEESKGDLRAAKEKAKDAIKRK) shows a compositional bias: basic and acidic residues.

Belongs to the UPF0337 (CsbD) family.

The sequence is that of UPF0337 protein SAV_738 from Streptomyces avermitilis (strain ATCC 31267 / DSM 46492 / JCM 5070 / NBRC 14893 / NCIMB 12804 / NRRL 8165 / MA-4680).